We begin with the raw amino-acid sequence, 150 residues long: Cytochrome c-type biogenesis protein CcmE (150 aa).

Topologically, residues 1 to 7 are cytoplasmic; it reads MTRKQKR. The chain crosses the membrane as a helical; Signal-anchor for type II membrane protein span at residues 8–28; the sequence is LAIIGGGVGFLTAAVLLVMFA. The Periplasmic portion of the chain corresponds to 29-150; it reads FSQAVAYFYV…VTLGGKENIQ (122 aa). Residues His-123 and Tyr-127 each contribute to the heme site.

This sequence belongs to the CcmE/CycJ family.

It localises to the cell inner membrane. In terms of biological role, heme chaperone required for the biogenesis of c-type cytochromes. Transiently binds heme delivered by CcmC and transfers the heme to apo-cytochromes in a process facilitated by CcmF and CcmH. The chain is Cytochrome c-type biogenesis protein CcmE from Sinorhizobium fredii (strain NBRC 101917 / NGR234).